We begin with the raw amino-acid sequence, 235 residues long: Ribosomal RNA small subunit methyltransferase G (235 aa).

S-adenosyl-L-methionine contacts are provided by residues G74, F79, 97-99 (EAT), 125-126 (AE), and R144.

The protein belongs to the methyltransferase superfamily. RNA methyltransferase RsmG family.

Its subcellular location is the cytoplasm. Its function is as follows. Specifically methylates the N7 position of a guanine in 16S rRNA. This chain is Ribosomal RNA small subunit methyltransferase G, found in Dehalococcoides mccartyi (strain CBDB1).